The following is a 486-amino-acid chain: L-carnitine:corrinoid methyltransferase (486 aa).

This sequence belongs to the trimethylamine methyltransferase family. In terms of assembly, the L-carnitine:THF methyl transfer system is composed of two methyltransferases, MtcB and MtqA, and the corrinoid protein MtqC.

The catalysed reaction is Co(I)-[quaternary-amine-specific corrinoid protein] + (R)-carnitine + H(+) = (3R)-4-(dimethylamino)-3-hydroxybutanoate + methyl-Co(III)-[quaternary-amine-specific corrinoid protein]. Functionally, involved in the degradation of the quaternary amine L-carnitine. Component of a corrinoid-dependent methyltransferase system that transfers a methyl group from L-carnitine to tetrahydrofolate (THF), forming methyl-THF, a key intermediate in the Wood-Ljungdahl acetogenesis pathway. MtcB catalyzes the methylation of the corrinoid protein MtqC, using L-carnitine as the methyl donor. L-carnitine demethylation generates the unusual biological product norcarnitine, which is likely degraded by other members of the gut microbiota. In vitro, can methylate free cob(I)alamin. The polypeptide is L-carnitine:corrinoid methyltransferase (Eubacterium limosum).